Reading from the N-terminus, the 184-residue chain is Probable chemoreceptor glutamine deamidase CheD (184 aa).

This sequence belongs to the CheD family.

It catalyses the reaction L-glutaminyl-[protein] + H2O = L-glutamyl-[protein] + NH4(+). Functionally, probably deamidates glutamine residues to glutamate on methyl-accepting chemotaxis receptors (MCPs), playing an important role in chemotaxis. The polypeptide is Probable chemoreceptor glutamine deamidase CheD (Rhizobium leguminosarum bv. trifolii (strain WSM2304)).